The primary structure comprises 177 residues: Transcription termination/antitermination protein NusG (177 aa).

One can recognise a KOW domain in the interval 128 to 156; the sequence is ETVKVIDGPFANFTGSIEEIDYDKSKVKV.

It belongs to the NusG family.

Functionally, participates in transcription elongation, termination and antitermination. Stimulates RNA polymerase pausing at U107 and U144 in the trp leader. NusG-stimulated pausing is sequence specific. Does not affect trp leader termination. The protein is Transcription termination/antitermination protein NusG of Bacillus subtilis (strain 168).